Consider the following 439-residue polypeptide: MNRPKVQRRVGKYEVGKTLGQGTFAKVRCAVNTETGERVALKILDKEKVLKHKMAEQIRREICTMKLINHPNVVRLYEVLASKTKIYIVLEFGTGGELFDKIVHDGRLKEENARKYFQQLINAVDYCHSRGVYHRDLKPENLLLDAQGNLKVSDFGLSALSRQVRGDGLLHTACGTPNYAAPEVLNDQGYDGATADLWSCGVILFVLLAGYLPFEDSNLMTLYKKIIAGEYHCPPWLSPGAKNLIVRILDPNPMTRITIPEVLGDAWFKKNYKPAVFEEKEEANLDDVDAVFKDSEEHHVTEKKEEQPTSMNAFELISMSRALDLGNLFEEEEGFKRETRFAAKGAANDLVQKIEEASKPLGFDIQKKNYKMRLENVTAGRKGNLRVATEIFQVSPSLHMIEVRKTKGDTLEFHKFYKKLSTSLNDVVWKSGESSGLSK.

Positions 13–268 (YEVGKTLGQG…IPEVLGDAWF (256 aa)) constitute a Protein kinase domain. ATP-binding positions include 19–27 (LGQGTFAKV) and lysine 42. The Proton acceptor role is filled by aspartate 136. The interval 154–183 (DFGLSALSRQVRGDGLLHTACGTPNYAAPE) is activation loop. The residue at position 158 (serine 158) is a Phosphoserine. Phosphothreonine is present on threonine 172. The NAF domain occupies 306-330 (EQPTSMNAFELISMSRALDLGNLFE). A PPI region spans residues 336 to 365 (KRETRFAAKGAANDLVQKIEEASKPLGFDI).

This sequence belongs to the protein kinase superfamily. CAMK Ser/Thr protein kinase family. SNF1 subfamily. As to quaternary structure, interacts with RBOHF (via N-terminus). The cofactor is Mn(2+).

It localises to the cell membrane. It carries out the reaction L-seryl-[protein] + ATP = O-phospho-L-seryl-[protein] + ADP + H(+). The enzyme catalyses L-threonyl-[protein] + ATP = O-phospho-L-threonyl-[protein] + ADP + H(+). Functionally, CIPK serine-threonine protein kinases interact with CBL proteins. Binding of a CBL protein to the regulatory NAF domain of CIPK protein lead to the activation of the kinase in a calcium-dependent manner. Involved in the calcium-dependent regulation of reactive oxygen species production by the NADPH oxidase RBOHF. This Arabidopsis thaliana (Mouse-ear cress) protein is CBL-interacting serine/threonine-protein kinase 26 (CIPK26).